A 421-amino-acid chain; its full sequence is Ameloblastin (421 aa).

Residues 1–26 (MPALKIPLFKMKDMVLILCLLKMSSA) form the signal peptide. Proline 37 is modified (hydroxyproline). Serine 43 bears the Phosphoserine mark. 3 disordered regions span residues 104-126 (PVHP…QKPF), 264-311 (GGMP…ADPE), and 333-421 (GKIP…FQEP). Serine 112 carries O-linked (GalNAc...) serine glycosylation. Residues 113 to 125 (QPSLQPQQPGQKP) show a composition bias toward low complexity. Residues 339 to 350 (ARGPAGRSRGPP) are compositionally biased toward low complexity. Residues 388-410 (MDSTATPYSEHTSMPGNKAQQPQ) show a composition bias toward polar residues. A compositionally biased stretch (basic and acidic residues) spans 411-421 (IKRDAWRFQEP).

It belongs to the ameloblastin family. In terms of tissue distribution, ameloblast-specific. Located at the Tomes processes of secretory ameloblasts and in the sheath space between rod-interrod enamel.

The protein resides in the secreted. Its subcellular location is the extracellular space. It localises to the extracellular matrix. Functionally, involved in the mineralization and structural organization of enamel. The polypeptide is Ameloblastin (AMBN) (Sus scrofa (Pig)).